A 2068-amino-acid polypeptide reads, in one-letter code: Lipoxygenase homology domain-containing protein 1 (2068 aa).

PLAT domains follow at residues 43–160 (KVYE…RDLL), 172–287 (NKYE…RDIL), 296–412 (ITYI…RQLY), 425–540 (YPWS…REMT), 553–673 (ARYR…RELL), 684–803 (FRYH…VELY), 814–934 (VHYE…RELL), 970–1088 (TTFS…RDLF), 1101–1226 (VPYE…RELV), 1255–1373 (VLYS…RLFY), 1422–1540 (IPYY…RVFD), 1553–1668 (VLYE…CEIC), 1680–1798 (TSYT…RDFA), 1811–1932 (TTYE…VFEV), and 1949–2065 (VKYE…RELF).

As to expression, expressed in the inner ear, specifically in hair cells. Higher expression is detected in the cochlea.

It is found in the cell projection. It localises to the stereocilium. In terms of biological role, required for normal function of hair cells in the inner ear. This chain is Lipoxygenase homology domain-containing protein 1 (Loxhd1), found in Mus musculus (Mouse).